Here is an 870-residue protein sequence, read N- to C-terminus: DNA mismatch repair protein MutS (870 aa).

Residue 620–627 participates in ATP binding; sequence GPNMAGKS.

Belongs to the DNA mismatch repair MutS family.

Its function is as follows. This protein is involved in the repair of mismatches in DNA. It is possible that it carries out the mismatch recognition step. This protein has a weak ATPase activity. In Syntrophotalea carbinolica (strain DSM 2380 / NBRC 103641 / GraBd1) (Pelobacter carbinolicus), this protein is DNA mismatch repair protein MutS.